The following is an 86-amino-acid chain: Thioredoxin (86 aa).

Catalysis depends on nucleophile residues Cys15 and Cys18. A disulfide bond links Cys15 and Cys18.

This sequence belongs to the glutaredoxin family.

Functionally, does not function as a glutathione-disulfide oxidoreductase in the presence of glutathione and glutathione reductase. Has low thioredoxin activity in vitro. This chain is Thioredoxin, found in Methanocaldococcus jannaschii (strain ATCC 43067 / DSM 2661 / JAL-1 / JCM 10045 / NBRC 100440) (Methanococcus jannaschii).